Here is a 617-residue protein sequence, read N- to C-terminus: Chaperone protein HscA homolog (617 aa).

It belongs to the heat shock protein 70 family.

Functionally, chaperone involved in the maturation of iron-sulfur cluster-containing proteins. Has a low intrinsic ATPase activity which is markedly stimulated by HscB. The protein is Chaperone protein HscA homolog of Aliivibrio salmonicida (strain LFI1238) (Vibrio salmonicida (strain LFI1238)).